The sequence spans 503 residues: Cytochrome P450 11B1, mitochondrial (503 aa).

Residues 1–24 (MAIWAKAEAWLAGPWLALNRARTL) constitute a mitochondrion transit peptide. Residue C450 coordinates heme.

It belongs to the cytochrome P450 family. Heme is required as a cofactor.

The protein resides in the mitochondrion inner membrane. The enzyme catalyses a steroid + 2 reduced [adrenodoxin] + O2 + 2 H(+) = an 11beta-hydroxysteroid + 2 oxidized [adrenodoxin] + H2O. It catalyses the reaction 11-deoxycortisol + 2 reduced [adrenodoxin] + O2 + 2 H(+) = cortisol + 2 oxidized [adrenodoxin] + H2O. The catalysed reaction is 21-hydroxyprogesterone + 2 reduced [adrenodoxin] + O2 + 2 H(+) = corticosterone + 2 oxidized [adrenodoxin] + H2O. It carries out the reaction corticosterone + 2 reduced [adrenodoxin] + O2 + 2 H(+) = 18-hydroxycorticosterone + 2 oxidized [adrenodoxin] + H2O. The enzyme catalyses 18-hydroxycorticosterone + 2 reduced [adrenodoxin] + O2 + 2 H(+) = aldosterone + 2 oxidized [adrenodoxin] + 2 H2O. It catalyses the reaction 21-hydroxyprogesterone + 2 reduced [adrenodoxin] + O2 + 2 H(+) = 19-hydroxy-11-deoxycorticosterone + 2 oxidized [adrenodoxin] + H2O. The catalysed reaction is 19-hydroxy-11-deoxycorticosterone + 2 reduced [adrenodoxin] + O2 + 2 H(+) = 19-oxo-11-deoxycorticosterone + 2 oxidized [adrenodoxin] + 2 H2O. It participates in steroid biosynthesis; glucocorticoid biosynthesis. The protein operates within steroid hormone biosynthesis. Functionally, a cytochrome P450 monooxygenase that catalyzes the biosynthesis of aldosterone and other adrenal corticoids. Differing from other species (such as human, rat and mice), it is able to catalyze three sequential oxidative reactions of 11-deoxycorticosterone (21-hydroxyprogesterone), namely 11-beta hydroxylation, followed by two successive oxidations at C18 yielding 18-hydroxy and then 18-oxo intermediates, and ending with the formation of aldosterone. Steroid 11beta, 18- and 19-hydroxylase. Mechanistically, uses molecular oxygen inserting one oxygen atom into a substrate and reducing the second into a water molecule. Two electrons are provided by NADPH via a two-protein mitochondrial transfer system comprising flavoprotein FDXR (adrenodoxin/ferredoxin reductase) and nonheme iron-sulfur protein FDX1 or FDX2 (adrenodoxin/ferredoxin). This Sus scrofa (Pig) protein is Cytochrome P450 11B1, mitochondrial (CYP11B1).